The primary structure comprises 207 residues: Mediator of RNA polymerase II transcription subunit 18 (207 aa).

This sequence belongs to the Mediator complex subunit 18 family. In terms of assembly, component of the Mediator complex. Interacts with med17, prk1 and rbp1.

The protein localises to the nucleus. Component of the Mediator complex, a coactivator involved in the regulated transcription of nearly all RNA polymerase II-dependent genes. Mediator functions as a bridge to convey information from gene-specific regulatory proteins to the basal RNA polymerase II transcription machinery. Mediator is recruited to promoters by direct interactions with regulatory proteins and serves as a scaffold for the assembly of a functional preinitiation complex with RNA polymerase II and the general transcription factors. The chain is Mediator of RNA polymerase II transcription subunit 18 (med18) from Schizosaccharomyces pombe (strain 972 / ATCC 24843) (Fission yeast).